Reading from the N-terminus, the 550-residue chain is CCR4-NOT transcription complex subunit 6-like-B (550 aa).

The required for interaction with cnot1, cnot3 and cnot7 stretch occupies residues Met1–Lys148. LRR repeat units lie at residues His52–Leu73, Asn75–Val96, Ser98–Phe120, and Arg121–Pro143. Residues Met153–Arg550 are nuclease domain. Glu235 is a Mg(2+) binding site. 4 residues coordinate substrate: Glu235, Glu271, His355, and Pro360. Asp405 is a binding site for Mg(2+). Residue Asp405 is the Proton donor/acceptor of the active site. Residues Asn407, Asn474, and Phe479 each contribute to the substrate site.

This sequence belongs to the CCR4/nocturin family. As to quaternary structure, component of the CCR4-NOT complex. Mg(2+) serves as cofactor.

Its subcellular location is the cytoplasm. The protein localises to the nucleus. The enzyme catalyses Exonucleolytic cleavage of poly(A) to 5'-AMP.. Its function is as follows. Poly(A) nuclease with 3'-5' RNase activity. Catalytic component of the CCR4-NOT complex which is one of the major cellular mRNA deadenylases and is linked to various cellular processes including bulk mRNA degradation, miRNA-mediated repression, translational repression during translational initiation and general transcription regulation. Additional complex functions may be a consequence of its influence on mRNA expression. The protein is CCR4-NOT transcription complex subunit 6-like-B (cnot6l-b) of Xenopus laevis (African clawed frog).